The following is a 168-amino-acid chain: Tyrosine-protein phosphatase (168 aa).

A Tyrosine-protein phosphatase domain is found at 24–168 (FKTPLRPELF…RQNYVQDLLI (145 aa)). The active-site Phosphocysteine intermediate is Cys-119.

This sequence belongs to the protein-tyrosine phosphatase family. Non-receptor class CDC14 subfamily.

The enzyme catalyses O-phospho-L-tyrosyl-[protein] + H2O = L-tyrosyl-[protein] + phosphate. Plays a role in the regulation and processing of late viral mRNAs by displaying RNA 5'-triphosphatase and diphosphatase activities. The chain is Tyrosine-protein phosphatase (PTP) from Autographa californica nuclear polyhedrosis virus (AcMNPV).